Consider the following 238-residue polypeptide: NADH-quinone oxidoreductase subunit I (238 aa).

2 consecutive 4Fe-4S ferredoxin-type domains span residues 81 to 111 and 123 to 152; these read LVPREDGRARCVACYMCATACPAQCIYIEAG and VKFVIDELRCIVCGFCVEACPKDAIRMDSG. [4Fe-4S] cluster-binding residues include Cys-91, Cys-94, Cys-97, Cys-101, Cys-132, Cys-135, Cys-138, and Cys-142.

It belongs to the complex I 23 kDa subunit family. In terms of assembly, NDH-1 is composed of 14 different subunits. Subunits NuoA, H, J, K, L, M, N constitute the membrane sector of the complex. The cofactor is [4Fe-4S] cluster.

The protein localises to the cell inner membrane. It catalyses the reaction a quinone + NADH + 5 H(+)(in) = a quinol + NAD(+) + 4 H(+)(out). In terms of biological role, NDH-1 shuttles electrons from NADH, via FMN and iron-sulfur (Fe-S) centers, to quinones in the respiratory chain. The immediate electron acceptor for the enzyme in this species is believed to be ubiquinone. Couples the redox reaction to proton translocation (for every two electrons transferred, four hydrogen ions are translocated across the cytoplasmic membrane), and thus conserves the redox energy in a proton gradient. The sequence is that of NADH-quinone oxidoreductase subunit I from Anaeromyxobacter sp. (strain Fw109-5).